The sequence spans 135 residues: Large ribosomal subunit protein uL16c (135 aa).

This sequence belongs to the universal ribosomal protein uL16 family. In terms of assembly, part of the 50S ribosomal subunit.

It localises to the plastid. In Epifagus virginiana (Beechdrops), this protein is Large ribosomal subunit protein uL16c.